Here is a 230-residue protein sequence, read N- to C-terminus: Ribosomal RNA large subunit methyltransferase E (230 aa).

5 residues coordinate S-adenosyl-L-methionine: glycine 76, tryptophan 78, aspartate 99, aspartate 115, and aspartate 139. Lysine 179 acts as the Proton acceptor in catalysis.

Belongs to the class I-like SAM-binding methyltransferase superfamily. RNA methyltransferase RlmE family.

The protein resides in the cytoplasm. The enzyme catalyses uridine(2552) in 23S rRNA + S-adenosyl-L-methionine = 2'-O-methyluridine(2552) in 23S rRNA + S-adenosyl-L-homocysteine + H(+). Specifically methylates the uridine in position 2552 of 23S rRNA at the 2'-O position of the ribose in the fully assembled 50S ribosomal subunit. The sequence is that of Ribosomal RNA large subunit methyltransferase E from Nitrobacter winogradskyi (strain ATCC 25391 / DSM 10237 / CIP 104748 / NCIMB 11846 / Nb-255).